The following is a 395-amino-acid chain: Putative nickel insertion protein (395 aa).

The protein belongs to the LarC family.

In Methanopyrus kandleri (strain AV19 / DSM 6324 / JCM 9639 / NBRC 100938), this protein is Putative nickel insertion protein.